The primary structure comprises 1284 residues: Putative late blight resistance protein homolog R1B-16 (1284 aa).

Residues 533-555 are a coiled coil; the sequence is PRMNEEIVGFKDVIENLRNQLLN. An NB-ARC domain is found at 534-821; the sequence is RMNEEIVGFK…SESFIKSSEG (288 aa). 567-574 is a binding site for ATP; that stretch reads GMPGLGKT. 8 LRR repeats span residues 942 to 966, 985 to 1010, 1013 to 1036, 1085 to 1107, 1108 to 1135, 1159 to 1181, 1182 to 1206, and 1219 to 1243; these read FKFL…LFYL, LWNL…VWDM, LRHL…SAKL, PIRL…FCIS, APNL…HLKN, FPQL…ADDA, FPNL…FMDI, and ESVV…NFKL. Residues 1217-1284 enclose the HMA domain; it reads CNESVVKSAM…VEKQRKRGML (68 aa).

The protein belongs to the disease resistance NB-LRR family.

Its subcellular location is the cytoplasm. It localises to the membrane. Functionally, confers resistance to late blight (Phytophthora infestans) races carrying the avirulence gene Avr1. Resistance proteins guard the plant against pathogens that contain an appropriate avirulence protein via an indirect interaction with this avirulence protein. That triggers a defense system including the hypersensitive response, which restricts the pathogen growth. This chain is Putative late blight resistance protein homolog R1B-16 (R1B-16), found in Solanum demissum (Wild potato).